Consider the following 213-residue polypeptide: Virion protein US10 homolog (213 aa).

It belongs to the herpesviridae US10 family. In terms of processing, phosphorylated.

Its subcellular location is the virion tegument. It localises to the host nucleus matrix. The sequence is that of Virion protein US10 homolog (US639) from Gallid herpesvirus 2 (strain GA) (GaHV-2).